Consider the following 261-residue polypeptide: Prostate-specific antigen (261 aa).

A signal peptide spans 1 to 17; that stretch reads MWVPVVFLTLSVTWIGA. Residues 18 to 24 constitute a propeptide, activation peptide; that stretch reads APLILSR. A Peptidase S1 domain is found at 25 to 258; the sequence is IVGGWECEKH…YRKWIKDTIV (234 aa). Intrachain disulfides connect Cys31/Cys173, Cys50/Cys66, Cys152/Cys219, Cys184/Cys198, and Cys209/Cys234. Catalysis depends on His65, which acts as the Charge relay system. N-linked (GlcNAc...) asparagine glycosylation occurs at Asn69. The active-site Charge relay system is the Asp120. Ser213 acts as the Charge relay system in catalysis.

The protein belongs to the peptidase S1 family. Kallikrein subfamily. As to quaternary structure, forms a heterodimer with SERPINA5.

It localises to the secreted. It carries out the reaction Preferential cleavage: -Tyr-|-Xaa-.. Inhibited by SERPINA5. Activity is strongly inhibited by Zn2+, 100 times more abundant in semen than in serum. This inhibition is relieved by exposure to semenogelins, which are avid zinc binders. Its function is as follows. Hydrolyzes semenogelin-1 thus leading to the liquefaction of the seminal coagulum. This Homo sapiens (Human) protein is Prostate-specific antigen (KLK3).